A 391-amino-acid chain; its full sequence is NADH-quinone oxidoreductase subunit D (391 aa).

Belongs to the complex I 49 kDa subunit family. In terms of assembly, NDH-1 is composed of 14 different subunits. Subunits NuoB, C, D, E, F, and G constitute the peripheral sector of the complex.

The protein localises to the cell inner membrane. It carries out the reaction a quinone + NADH + 5 H(+)(in) = a quinol + NAD(+) + 4 H(+)(out). Functionally, NDH-1 shuttles electrons from NADH, via FMN and iron-sulfur (Fe-S) centers, to quinones in the respiratory chain. The immediate electron acceptor for the enzyme in this species is believed to be ubiquinone. Couples the redox reaction to proton translocation (for every two electrons transferred, four hydrogen ions are translocated across the cytoplasmic membrane), and thus conserves the redox energy in a proton gradient. The sequence is that of NADH-quinone oxidoreductase subunit D from Rickettsia conorii (strain ATCC VR-613 / Malish 7).